Reading from the N-terminus, the 874-residue chain is Cap-specific mRNA (nucleoside-2'-O-)-methyltransferase 1A (874 aa).

Basic and acidic residues predominate over residues 1–10; the sequence is MSERGDDDRT. A disordered region spans residues 1–64; sequence MSERGDDDRT…APPTKQKTKA (64 aa). Positions 60–106 constitute a G-patch domain; it reads QKTKAEEMMERMGYKAGEGLGKNKQGIQEPVALSTQRGKTGLGHEGA. Residues 211 to 440 form the RrmJ-type SAM-dependent 2'-O-MTase domain; sequence FFQNRAAMKT…ERYITCKGLR (230 aa). S-adenosyl-L-methionine is bound by residues glycine 273 and aspartate 354. Catalysis depends on lysine 394, which acts as the Proton acceptor. The tract at residues 535 to 555 is disordered; it reads PNKQRPRGGDRGSRNGNQERL.

The enzyme catalyses a 5'-end (N(7)-methyl 5'-triphosphoguanosine)-ribonucleoside in mRNA + S-adenosyl-L-methionine = a 5'-end (N(7)-methyl 5'-triphosphoguanosine)-(2'-O-methyl-ribonucleoside) in mRNA + S-adenosyl-L-homocysteine + H(+). Its function is as follows. S-adenosyl-L-methionine-dependent methyltransferase that mediates mRNA cap1 2'-O-ribose methylation to the 5'-cap structure of mRNAs. Methylates the ribose of the first nucleotide of a m(7)GpppG-capped mRNA to produce m(7)GpppNmp (cap1). Cap1 modification is linked to higher levels of translation. The chain is Cap-specific mRNA (nucleoside-2'-O-)-methyltransferase 1A from Caenorhabditis briggsae.